The chain runs to 437 residues: Triacylglycerol lipase (437 aa).

In terms of domain architecture, PE spans 1–100; the sequence is MVSYVVALPE…AELANASLLQ (100 aa). The segment at 101–206 is linker; that stretch reads SEFASGIGNG…GNSPPPLLNS (106 aa). The segment at 207 to 437 is lipase; that stretch reads LLGQTVQYTT…QINQQLGIAA (231 aa). Positions 239–241 match the Involved in the stabilization of the negatively charged intermediate by the formation of the oxyanion hole motif; sequence HGG. Catalysis depends on residues Ser-309, Asp-383, and His-413.

This sequence in the N-terminal section; belongs to the mycobacterial PE family. PGRS subfamily. It in the C-terminal section; belongs to the 'GDXG' lipolytic enzyme family. Forms aggregates via its PE domain. Post-translationally, upon export, the PE domain is removed by proteolytic cleavage. Cleavage occurs at the cell surface and is not required for secretion. Cleaved after Gly-149 by the aspartic protease PecA. May also be cleaved before Leu-98 and after Ala-136.

The protein localises to the cytoplasm. Its subcellular location is the secreted. It localises to the cell wall. It is found in the cell surface. It catalyses the reaction a triacylglycerol + H2O = a diacylglycerol + a fatty acid + H(+). It carries out the reaction 1,2,3-tri-(9Z-octadecenoyl)-glycerol + H2O = di-(9Z)-octadecenoylglycerol + (9Z)-octadecenoate + H(+). The enzyme catalyses an acetyl ester + H2O = an aliphatic alcohol + acetate + H(+). The catalysed reaction is a butanoate ester + H2O = an aliphatic alcohol + butanoate + H(+). It catalyses the reaction a hexanoate ester + H2O = an aliphatic alcohol + hexanoate + H(+). It carries out the reaction an octanoate ester + H2O = an aliphatic alcohol + octanoate + H(+). The enzyme catalyses a dodecanoate ester + H2O = an aliphatic alcohol + dodecanoate + H(+). The catalysed reaction is a tetradecanoate ester + H2O = an aliphatic alcohol + tetradecanoate + H(+). It catalyses the reaction hexadecanoate ester + H2O = an aliphatic alcohol + hexadecanoate + H(+). It carries out the reaction octadecanoate ester + H2O = an aliphatic alcohol + octadecanoate + H(+). The enzyme catalyses 1-butyrylglycerol + H2O = butanoate + glycerol + H(+). The catalysed reaction is 1,2,3-tributanoylglycerol + H2O = dibutanoylglycerol + butanoate + H(+). Its activity is regulated as follows. PE domain down-regulates lipase activity. Cleavage by PecA does not affect surface localization and lipase activity. With respect to regulation, inhibited by diethyl-p-nitrophenyl phosphate (E-600) at 0.5 uM, by phenylmethanesulfonyl fluoride at 5 mM and by polyethylene glycol sorbitan monolaurate (Tween 20). Also inhibited by CaCl(2), CoCl(2), MnCl(2), ZnCl(2) and MgCl(2). Inhibited by several hydrazides compounds. Stimulated slightly by SDS at concentrations up to 2 mM, above which the activity is severely inhibited. In terms of biological role, catalyzes the hydrolysis of both intracellular and extracellular triacylglycerol (TAG). In vitro, can also hydrolyze p-nitrophenyl (pNP) esters with various chain lengths, including pNP-acetate (C2), pNP-butyrate (C4), pNP-caproate (C6), pNP-caprylate (C8), pNP-laurate (C12), pNP-myristate (C14), pNP-palmitate (C16) and pNP-stearate (C18). Also hydrolyzes monobutyrin, tributyrin and trioctanoin. Overexpression results in increase of virulence characterized by reduced survival of infected mouse and increased burden of bacilli in the lungs. Hydrolyzes internal or host-derived TAG depending on its localization. Its function is as follows. Hydrolyzes TAG that accumulates within mycobacterial intracytosolic lipid inclusions (ILI). Probably responsible for the utilization of stored long-chain TAG during the dormancy and reactivation stages of the pathogen. Functionally, hydrolyzes host-derived TAG. This Mycobacterium tuberculosis (strain ATCC 25618 / H37Rv) protein is Triacylglycerol lipase.